The following is a 108-amino-acid chain: Small ribosomal subunit protein bS6 (108 aa).

This sequence belongs to the bacterial ribosomal protein bS6 family.

Its function is as follows. Binds together with bS18 to 16S ribosomal RNA. The polypeptide is Small ribosomal subunit protein bS6 (Trichormus variabilis (strain ATCC 29413 / PCC 7937) (Anabaena variabilis)).